We begin with the raw amino-acid sequence, 697 residues long: Elongation factor G 2 (697 aa).

In terms of domain architecture, tr-type G spans 5-280 (SKYRNIGIFA…AVVDYLPAPD (276 aa)). GTP contacts are provided by residues 14–21 (AHVDAGKT), 78–82 (DTPGH), and 132–135 (NKLD).

This sequence belongs to the TRAFAC class translation factor GTPase superfamily. Classic translation factor GTPase family. EF-G/EF-2 subfamily.

It is found in the cytoplasm. In terms of biological role, catalyzes the GTP-dependent ribosomal translocation step during translation elongation. During this step, the ribosome changes from the pre-translocational (PRE) to the post-translocational (POST) state as the newly formed A-site-bound peptidyl-tRNA and P-site-bound deacylated tRNA move to the P and E sites, respectively. Catalyzes the coordinated movement of the two tRNA molecules, the mRNA and conformational changes in the ribosome. In Shewanella oneidensis (strain ATCC 700550 / JCM 31522 / CIP 106686 / LMG 19005 / NCIMB 14063 / MR-1), this protein is Elongation factor G 2 (fusB).